We begin with the raw amino-acid sequence, 430 residues long: Isochorismate synthase MenF (430 aa).

The active-site Proton acceptor is the lysine 187. Glutamate 237 acts as the Proton donor in catalysis. 2 residues coordinate Mg(2+): glutamate 281 and glutamate 414.

This sequence belongs to the isochorismate synthase family. Mg(2+) serves as cofactor.

The enzyme catalyses chorismate = isochorismate. It participates in quinol/quinone metabolism; 1,4-dihydroxy-2-naphthoate biosynthesis; 1,4-dihydroxy-2-naphthoate from chorismate: step 1/7. It functions in the pathway quinol/quinone metabolism; menaquinone biosynthesis. Functionally, catalyzes the conversion of chorismate to isochorismate. The chain is Isochorismate synthase MenF from Haemophilus influenzae (strain ATCC 51907 / DSM 11121 / KW20 / Rd).